The following is a 288-amino-acid chain: MDYIENQGAYGTPTASIDWCELNYTYSPYIAEFYNTFSSLIISLFGIYGIWIMMPNFGTGVEKEHIKILKQLDVRNKVILSYISLIVVGVGSAFYHATLLYQNQLFDELPMIYTALIMLYIMVTVGEEKTKKGFKGGVLGNSLLRHLLPYLLIAYGLFVTITILVIQDQPKILQVSFGALVFYVVFHSIYLINKKKPDGMPSNPDSYLYKYAFVSMLVGFTCWVVERYFCKNGKTFGFQLHAFWHFFTGMSTYVWTQFLICKLLEAKHYCVGIKHTLGLPRIHAIKRF.

A glycan (N-linked (GlcNAc...) asparagine) is linked at Asn23. 7 helical membrane-spanning segments follow: residues 41 to 61 (IISLFGIYGIWIMMPNFGTGV), 78 to 98 (VILSYISLIVVGVGSAFYHAT), 105 to 125 (LFDELPMIYTALIMLYIMVTV), 146 to 166 (HLLPYLLIAYGLFVTITILVI), 172 to 192 (ILQVSFGALVFYVVFHSIYLI), 206 to 226 (SYLYKYAFVSMLVGFTCWVVE), and 240 to 260 (LHAFWHFFTGMSTYVWTQFLI).

Belongs to the alkaline ceramidase family.

The protein localises to the membrane. This is Putative alkaline ceramidase dcd3A (dcd3A) from Dictyostelium discoideum (Social amoeba).